The chain runs to 394 residues: DDFKDLGFIDKQKAHVKEAVSKLTARSDSSLAGFVLDMFCTSMIDVAKELGVPYYIFFTSGAAFLGFLFYVQLIHDEQDADLTQFKDSDAELSVPSLANSLPARVLPASMLVKDRFYAFIRIIRGLREAKGIMVNTFMELESHALNSLKDDQSKIPPIYPVGPILKLSNQENDVGPEGSEIIEWLDDQPPSSVVFLCFGSMGGFDMDQAKEIACALEQSRHRFLWSLRRPPPKGKIETSTDYENLQEILPVGFSERTAGMGKVVGWAPQVAILEHPAIGGFVSHCGWNSILESIWFSVPIATWPLYAEQQFNAFTMVTELGLAVEIKMDYKKESEIILSADDIERGIKCVMEHHSEIRKRVKEMSDKSRKALMDDESSSFWLDRLIEDVINNLS.

Catalysis depends on Asp37, which acts as the Charge relay. UDP-alpha-D-glucose contacts are provided by Thr59, Ala267, Gln269, His284, Trp287, Asn288, Ser289, and Glu292. Residue Ala307 participates in an anthocyanidin binding. Positions 308 and 309 each coordinate UDP-alpha-D-glucose.

This sequence belongs to the UDP-glycosyltransferase family. In terms of tissue distribution, expressed in cotyledons and leaves.

It catalyses the reaction an anthocyanidin + UDP-alpha-D-glucose + H(+) = an anthocyanidin 3-O-beta-D-glucoside + UDP. It functions in the pathway pigment biosynthesis; anthocyanin biosynthesis. In terms of biological role, in the presence of other necessary color factors, this glycosylation reaction allows the accumulation of anthocyanin pigments. May be involved in glycosylation of unstable cyanohydrins to produce stable cyanoglucosides. In Manihot esculenta (Cassava), this protein is Anthocyanidin 3-O-glucosyltransferase 6 (GT6).